The sequence spans 340 residues: DNA-directed RNA polymerase subunit alpha (340 aa).

Positions 1-236 (MLSLSKNWNT…EQLQLFISFE (236 aa)) are alpha N-terminal domain (alpha-NTD). Residues 251–340 (FSPYLLKRVD…LSKRYEDSYN (90 aa)) form an alpha C-terminal domain (alpha-CTD) region.

The protein belongs to the RNA polymerase alpha chain family. Homodimer. The RNAP catalytic core consists of 2 alpha, 1 beta, 1 beta' and 1 omega subunit. When a sigma factor is associated with the core the holoenzyme is formed, which can initiate transcription.

The enzyme catalyses RNA(n) + a ribonucleoside 5'-triphosphate = RNA(n+1) + diphosphate. In terms of biological role, DNA-dependent RNA polymerase catalyzes the transcription of DNA into RNA using the four ribonucleoside triphosphates as substrates. This chain is DNA-directed RNA polymerase subunit alpha, found in Rickettsia rickettsii (strain Iowa).